A 477-amino-acid chain; its full sequence is Trigger factor (477 aa).

Residues 169–254 enclose the PPIase FKBP-type domain; it reads EDRVTIDYLG…VKEVAKPNEL (86 aa). Positions 435 to 477 are disordered; it reads VSKEELTAEDEDAASEAKPAKKAAAKKKAAPKKKAEEGKSEEA. The segment covering 454–466 has biased composition (basic residues); it reads AKKAAAKKKAAPK. The segment covering 467–477 has biased composition (basic and acidic residues); the sequence is KKAEEGKSEEA.

The protein belongs to the FKBP-type PPIase family. Tig subfamily.

The protein localises to the cytoplasm. The catalysed reaction is [protein]-peptidylproline (omega=180) = [protein]-peptidylproline (omega=0). Functionally, involved in protein export. Acts as a chaperone by maintaining the newly synthesized protein in an open conformation. Functions as a peptidyl-prolyl cis-trans isomerase. In Brucella suis biovar 1 (strain 1330), this protein is Trigger factor.